Consider the following 219-residue polypeptide: Thymidylate kinase (219 aa).

10–17 (GLEGAGKT) lines the ATP pocket.

The protein belongs to the thymidylate kinase family.

It catalyses the reaction dTMP + ATP = dTDP + ADP. In terms of biological role, phosphorylation of dTMP to form dTDP in both de novo and salvage pathways of dTTP synthesis. The polypeptide is Thymidylate kinase (Pectobacterium carotovorum subsp. carotovorum (strain PC1)).